The sequence spans 236 residues: Phosphoribosylaminoimidazole-succinocarboxamide synthase (236 aa).

It belongs to the SAICAR synthetase family.

It carries out the reaction 5-amino-1-(5-phospho-D-ribosyl)imidazole-4-carboxylate + L-aspartate + ATP = (2S)-2-[5-amino-1-(5-phospho-beta-D-ribosyl)imidazole-4-carboxamido]succinate + ADP + phosphate + 2 H(+). Its pathway is purine metabolism; IMP biosynthesis via de novo pathway; 5-amino-1-(5-phospho-D-ribosyl)imidazole-4-carboxamide from 5-amino-1-(5-phospho-D-ribosyl)imidazole-4-carboxylate: step 1/2. The sequence is that of Phosphoribosylaminoimidazole-succinocarboxamide synthase (purC) from Rickettsia prowazekii (strain Madrid E).